Consider the following 644-residue polypeptide: G-protein coupled receptor-associated protein LMBRD2 (644 aa).

Topologically, residues 1–4 (MGTV) are extracellular. A helical transmembrane segment spans residues 5–27 (SLAVQLFIVFLLTSYLLNKYSTI). The Cytoplasmic segment spans residues 28–31 (RKQN). A helical transmembrane segment spans residues 32 to 52 (PIVTISTFIGWYFSLIIVFVL). The Extracellular segment spans residues 53–102 (PLDVAITFFHKCENDRQRVLNTTSTPAPIVPECELPGGYVPDDVLFDLWR). A glycan (N-linked (GlcNAc...) asparagine) is linked at N73. The chain crosses the membrane as a helical span at residues 103–123 (VVYWSAQILTWLILPLLQSYV). At 124-145 (TAGNFTIFGKIRAAVINNTVYY) the chain is on the cytoplasmic side. Residues 146-166 (AIYSLCFLAILIYAMFKGVSI) traverse the membrane as a helical segment. Over 167-172 (NIENLK) the chain is Extracellular. A helical transmembrane segment spans residues 173–193 (VILVSASNTWGLFLLVVLLGH). Over 194–369 (GLVELPRSLW…RLQTPFCRVL (176 aa)) the chain is Cytoplasmic. Positions 216-245 (YFDIEKLASEKSEAEENVKEIYKKVRVLFN) form a coiled coil. Residues 370–390 (GVVTVFMTFFVLFSECTFFVV) traverse the membrane as a helical segment. The Extracellular portion of the chain corresponds to 391-412 (SYTVSPAAFVTEYASNRFHYKY). Residues 413-433 (TQFVAFGIIVYLITCAYFTIF) traverse the membrane as a helical segment. Residues 434-453 (RLQIYKYYHLDPNGHTDENS) lie on the Cytoplasmic side of the membrane. A helical membrane pass occupies residues 454–474 (ILFSAILLCRLTPPICLNFLG). Topologically, residues 475-502 (MIHMDSHVSMAKSFGVETQFTKLMGHLD) are extracellular. A helical membrane pass occupies residues 503–523 (VIPILAKGINIYLPICIILLC). The Cytoplasmic portion of the chain corresponds to 524 to 644 (AIHYYRVGAY…PSSSGFFDDM (121 aa)). Basic and acidic residues predominate over residues 567–576 (SIKRSNERNQ). A disordered region spans residues 567–644 (SIKRSNERNQ…PSSSGFFDDM (78 aa)). Residues 578–594 (NQSWTNTITSNTSTTSN) show a composition bias toward low complexity. Positions 621 to 644 (VSSTTRISLSPTEHPSSSGFFDDM) are enriched in polar residues.

It belongs to the LIMR family.

The protein resides in the cell membrane. Its function is as follows. May associate with G-protein coupled receptors and regulate downstream signaling pathways. The protein is G-protein coupled receptor-associated protein LMBRD2 of Caenorhabditis briggsae.